A 424-amino-acid chain; its full sequence is MAKNIQAIRGMNDYLPGETAIWQRIEGTLKNVLGSYGYSEIRLPIVEQTPLFKRAIGEVTDVVEKEMYTFEDRNGDSLTLRPEGTAGCVRAGIEHGLLYNQEQRLWYIGPMFRHERPQKGRYRQFHQLGCEVFGLQGPDIDAELIMLTARWWRALGISEHVTLELNSIGSLEARANYRDALVAFLEQHKEKLDEDCKRRMYTNPLRVLDSKNPEVQALLNDAPALGDYLDEESREHFAGLCKLLESAGIAYTVNQRLVRGLDYYNRTVFEWVTNSLGSQGTVCAGGRYDGLVEQLGGRATPAVGFAMGLERLVLLVQAVNPEFKADPIVDIYLVASGADTQSAAMALAERLRDELQGVKLMTNHGGGNFKKQFARADKWGARVAVVLGESEVTNGTAVVKDLRSGEQTAVAQDSVAAHLRTLLG.

This sequence belongs to the class-II aminoacyl-tRNA synthetase family. Homodimer.

Its subcellular location is the cytoplasm. The catalysed reaction is tRNA(His) + L-histidine + ATP = L-histidyl-tRNA(His) + AMP + diphosphate + H(+). The polypeptide is Histidine--tRNA ligase (Shigella boydii serotype 18 (strain CDC 3083-94 / BS512)).